The sequence spans 222 residues: uncharacterized protein (222 aa).

2 consecutive transmembrane segments (helical) span residues 22 to 42 (IRVI…FLYI) and 189 to 209 (AICL…FCLV).

It is found in the cell membrane. This is an uncharacterized protein from Escherichia coli (strain K12).